The chain runs to 260 residues: Peptidase inhibitor 15-A (260 aa).

Residues 1 to 21 form the signal peptide; it reads MNENRLAIDILLLCISCGASA. The propeptide occupies 22 to 62; sequence LAGFSPTASSSLPATNLTDIGFAPPKYLTEAANIPKTRRKR. 2 N-linked (GlcNAc...) asparagine glycosylation sites follow: N37 and N126. The SCP domain occupies 73–213; the sequence is LDYHNKVRGK…KRATYLVCNY (141 aa).

The protein belongs to the CRISP family.

The protein localises to the secreted. In terms of biological role, serine protease inhibitor which displays weak inhibitory activity against trypsin. May play a role in facial patterning during embryonic development. This is Peptidase inhibitor 15-A (pi15a) from Danio rerio (Zebrafish).